The following is a 68-amino-acid chain: Suppressor of RNA silencing (68 aa).

Residues 23 to 43 (LLTMSGAYVNVCVCIVFFILV) form a helical membrane-spanning segment.

Belongs to the virgaviridae suppressor of RNA silencing family.

It is found in the host endoplasmic reticulum membrane. Functionally, suppressor of RNA-mediated gene silencing, also known as post-transcriptional gene silencing (PTGS), a mechanism of plant viral defense that performs sequence-specific inhibition of viral mRNAs expression. The RNA silencing suppression activity is variable depending on the origin of the isolate. This chain is Suppressor of RNA silencing (8K protein), found in Solanum nigrum (Black nightshade).